We begin with the raw amino-acid sequence, 101 residues long: MEGVPSVRDSLVRARILVRGVVQGVFFRASMREEALRLGLSGWVRNLPDGESVEAVVEGRGDAVERIICWCLRGPPAARVRELRVELEPYKGEFRGFEIRY.

The Acylphosphatase-like domain occupies 13–101 (RARILVRGVV…GEFRGFEIRY (89 aa)). Catalysis depends on residues arginine 28 and asparagine 46.

This sequence belongs to the acylphosphatase family.

The enzyme catalyses an acyl phosphate + H2O = a carboxylate + phosphate + H(+). The protein is Acylphosphatase (acyP) of Aeropyrum pernix (strain ATCC 700893 / DSM 11879 / JCM 9820 / NBRC 100138 / K1).